Reading from the N-terminus, the 160-residue chain is MKRAADYIEMKSPAKPEYVGIIRLTLSGIASKMGYSYDDIEDLKIAVSEACTNAVQHAYKADKTGEVSVRFGVFEDRLEIIVADQGDSFDIHDKQKGLGPYSPEHTVDQLSEGGLGLYLMETLMDEVRVQIDSGVTVSMTKFLNRERVDDGTTVQNYETN.

Belongs to the anti-sigma-factor family.

It carries out the reaction L-seryl-[protein] + ATP = O-phospho-L-seryl-[protein] + ADP + H(+). The catalysed reaction is L-threonyl-[protein] + ATP = O-phospho-L-threonyl-[protein] + ADP + H(+). Negative regulator of sigma-B activity. Phosphorylates and inactivates its specific antagonist protein, RsbV. Upon phosphorylation of RsbV, RsbW is released and binds to sigma-B, thereby blocking its ability to form an RNA polymerase holoenzyme (E-sigma-B). The sequence is that of Serine-protein kinase RsbW from Bacillus licheniformis.